The sequence spans 117 residues: MARVKRGFKARRRRNKVLKLAKGYRGARSKLFRSATEAVDRALNYAFRDRRVKKRDFRSLWITRINAASRLNGLSYSKFIFGLKKANVEIDRKVLADIAVSDPKGFSEIAGVARASI.

It belongs to the bacterial ribosomal protein bL20 family.

Binds directly to 23S ribosomal RNA and is necessary for the in vitro assembly process of the 50S ribosomal subunit. It is not involved in the protein synthesizing functions of that subunit. The sequence is that of Large ribosomal subunit protein bL20 from Pelobacter propionicus (strain DSM 2379 / NBRC 103807 / OttBd1).